The primary structure comprises 177 residues: Outer membrane lipoprotein Blc (177 aa).

Positions 1 to 18 (MRILPVVAAVTAAFLVVA) are cleaved as a signal peptide. The N-palmitoyl cysteine moiety is linked to residue C19. The S-diacylglycerol cysteine moiety is linked to residue C19.

It belongs to the calycin superfamily. Lipocalin family. As to quaternary structure, homodimer.

Its subcellular location is the cell outer membrane. In terms of biological role, involved in the storage or transport of lipids necessary for membrane maintenance under stressful conditions. Displays a binding preference for lysophospholipids. The protein is Outer membrane lipoprotein Blc of Citrobacter freundii.